The following is a 150-amino-acid chain: Ribonuclease H (150 aa).

The region spanning 2 to 143 (PAPILDIFVD…ADELANRAIE (142 aa)) is the RNase H type-1 domain. Positions 11, 49, 71, and 135 each coordinate Mg(2+).

Belongs to the RNase H family. Monomer. It depends on Mg(2+) as a cofactor.

The protein localises to the cytoplasm. It catalyses the reaction Endonucleolytic cleavage to 5'-phosphomonoester.. In terms of biological role, endonuclease that specifically degrades the RNA of RNA-DNA hybrids. The sequence is that of Ribonuclease H from Dichelobacter nodosus (strain VCS1703A).